The sequence spans 526 residues: Beta,beta-carotene 15,15'-dioxygenase (526 aa).

The Fe cation site is built by His-172, His-236, His-307, and His-512.

It belongs to the carotenoid oxygenase family. Fe(2+) is required as a cofactor.

It localises to the cytoplasm. The protein localises to the cytosol. It catalyses the reaction all-trans-beta-carotene + O2 = 2 all-trans-retinal. Its pathway is cofactor metabolism; retinol metabolism. Symmetrically cleaves beta-carotene into two molecules of retinal using a dioxygenase mechanism. The polypeptide is Beta,beta-carotene 15,15'-dioxygenase (Gallus gallus (Chicken)).